The primary structure comprises 65 residues: Sulfur carrier protein TtuB (65 aa).

Glycine 65 bears the 1-thioglycine; alternate mark. Glycine 65 carries the post-translational modification Glycyl adenylate; alternate. Glycine 65 is covalently cross-linked (Glycyl cysteine thioester (Gly-Cys) (interchain with C-192 in TtuC); alternate). Glycine 65 is covalently cross-linked (Glycyl lysine isopeptide (Gly-Lys) (interchain with K-? in acceptor proteins); alternate).

It belongs to the TtuB family. Is able to form a heterocomplex with TtuA. Post-translationally, the C-terminal glycine residue of TtuB is first activated by TtuC as an acyl-adenylate (TtuB-COAMP), and then converted to the thiocarboxylate form (TtuB-COSH) by the cysteine desulfurases IscS or SufS.

It participates in tRNA modification. In terms of biological role, required for the 2-thiolation of 5-methyluridine residue at position 54 in the T loop of tRNAs, leading to 5-methyl-2-thiouridine (m(5)s(2)U or s(2)T). This modification allows thermal stabilization of tRNAs in thermophilic microorganisms, and is essential for cell growth at high temperatures. Thiocarboxylated TtuB functions as the sulfur donor in the sulfurtransferase reaction catalyzed by TtuA. TtuB also functions as a protein modifier covalently attached to lysine residues of the target proteins TtuA and TtuC. TtuB conjugation might play a regulatory role to ensure appropriate sulfur transfer in cells. This Thermus thermophilus (strain ATCC BAA-163 / DSM 7039 / HB27) protein is Sulfur carrier protein TtuB.